A 507-amino-acid polypeptide reads, in one-letter code: ATP synthase subunit alpha, chloroplastic (507 aa).

Residue 170–177 (GDRQTGKT) coordinates ATP.

The protein belongs to the ATPase alpha/beta chains family. As to quaternary structure, F-type ATPases have 2 components, CF(1) - the catalytic core - and CF(0) - the membrane proton channel. CF(1) has five subunits: alpha(3), beta(3), gamma(1), delta(1), epsilon(1). CF(0) has four main subunits: a, b, b' and c.

Its subcellular location is the plastid. It is found in the chloroplast thylakoid membrane. It catalyses the reaction ATP + H2O + 4 H(+)(in) = ADP + phosphate + 5 H(+)(out). Produces ATP from ADP in the presence of a proton gradient across the membrane. The alpha chain is a regulatory subunit. The sequence is that of ATP synthase subunit alpha, chloroplastic from Anthoceros angustus (Hornwort).